Consider the following 386-residue polypeptide: Succinate--CoA ligase [ADP-forming] subunit beta (386 aa).

Residues Lys-9–Arg-244 enclose the ATP-grasp domain. Residues Lys-46, Gly-53 to Gly-55, Glu-99, Cys-102, and Glu-107 each bind ATP. Mg(2+)-binding residues include Asn-199 and Asp-213. Substrate contacts are provided by residues Asn-264 and Gly-321–Met-323.

It belongs to the succinate/malate CoA ligase beta subunit family. As to quaternary structure, heterotetramer of two alpha and two beta subunits. It depends on Mg(2+) as a cofactor.

It carries out the reaction succinate + ATP + CoA = succinyl-CoA + ADP + phosphate. It catalyses the reaction GTP + succinate + CoA = succinyl-CoA + GDP + phosphate. It functions in the pathway carbohydrate metabolism; tricarboxylic acid cycle; succinate from succinyl-CoA (ligase route): step 1/1. In terms of biological role, succinyl-CoA synthetase functions in the citric acid cycle (TCA), coupling the hydrolysis of succinyl-CoA to the synthesis of either ATP or GTP and thus represents the only step of substrate-level phosphorylation in the TCA. The beta subunit provides nucleotide specificity of the enzyme and binds the substrate succinate, while the binding sites for coenzyme A and phosphate are found in the alpha subunit. The chain is Succinate--CoA ligase [ADP-forming] subunit beta from Rickettsia typhi (strain ATCC VR-144 / Wilmington).